Here is a 392-residue protein sequence, read N- to C-terminus: Phosphoglycerate kinase (392 aa).

Substrate is bound by residues Asp21–Asn23, Arg36, His59–Arg62, Arg114, and Arg147. ATP contacts are provided by residues Lys198, Glu320, and Gly346–Thr349.

The protein belongs to the phosphoglycerate kinase family. Monomer.

Its subcellular location is the cytoplasm. The enzyme catalyses (2R)-3-phosphoglycerate + ATP = (2R)-3-phospho-glyceroyl phosphate + ADP. Its pathway is carbohydrate degradation; glycolysis; pyruvate from D-glyceraldehyde 3-phosphate: step 2/5. This chain is Phosphoglycerate kinase, found in Neisseria meningitidis serogroup A / serotype 4A (strain DSM 15465 / Z2491).